The primary structure comprises 190 residues: Guanylate kinase (190 aa).

Residues 7 to 186 enclose the Guanylate kinase-like domain; that stretch reads GKLIVFSAPS…AVDDVEAAIV (180 aa). 14–21 provides a ligand contact to ATP; that stretch reads APSGAGKT.

It belongs to the guanylate kinase family.

It is found in the cytoplasm. It carries out the reaction GMP + ATP = GDP + ADP. Its function is as follows. Essential for recycling GMP and indirectly, cGMP. This is Guanylate kinase from Chlorobium chlorochromatii (strain CaD3).